The primary structure comprises 133 residues: MNLMLQNLNNIRTLRAMAREFSIDVLEEMLEKFRVVTKERREEEELQQRQLAEKQEKINAFLELMKADGINPEELFAMDSAMPRSAKKRQPRPAKYRFTDFNGEEKTWTGQGRTPKPIAQALAAGKSLDDFLI.

The segment at 81-115 (AMPRSAKKRQPRPAKYRFTDFNGEEKTWTGQGRTP) is disordered. A compositionally biased stretch (basic residues) spans 85–95 (SAKKRQPRPAK). The DNA-binding element occupies 111 to 116 (QGRTPK).

Belongs to the histone-like protein H-NS family. As to quaternary structure, forms homodimers, can interact with H-NS.

Its subcellular location is the cytoplasm. The protein resides in the nucleoid. A DNA-binding protein that acts in a fashion similar to H-NS, repressing gene transcription. A subset of H-NS/StpA-regulated genes require auxillary proteins for repression; these auxillary proteins (Hha and other similar proteins) may also modulate oligomerization of the H-NS/StpA complex. In Salmonella typhi, this protein is DNA-binding protein StpA (stpA).